A 503-amino-acid chain; its full sequence is Lanosterol 14-alpha demethylase (503 aa).

A helical membrane pass occupies residues G24–F44. C449 is a binding site for heme.

Belongs to the cytochrome P450 family. Requires heme as cofactor. Ubiquitinated by MARCHF6, leading to proteasomal degradation.

It localises to the endoplasmic reticulum membrane. It is found in the microsome membrane. It carries out the reaction a 14alpha-methyl steroid + 3 reduced [NADPH--hemoprotein reductase] + 3 O2 = a Delta(14) steroid + formate + 3 oxidized [NADPH--hemoprotein reductase] + 4 H2O + 4 H(+). It catalyses the reaction lanosterol + 3 reduced [NADPH--hemoprotein reductase] + 3 O2 = 4,4-dimethyl-5alpha-cholesta-8,14,24-trien-3beta-ol + formate + 3 oxidized [NADPH--hemoprotein reductase] + 4 H2O + 4 H(+). The enzyme catalyses 24,25-dihydrolanosterol + 3 reduced [NADPH--hemoprotein reductase] + 3 O2 = 4,4-dimethyl-8,14-cholestadien-3beta-ol + formate + 3 oxidized [NADPH--hemoprotein reductase] + 4 H2O + 4 H(+). The catalysed reaction is a 14alpha-methyl steroid + reduced [NADPH--hemoprotein reductase] + O2 = a 14alpha-hydroxymethyl steroid + oxidized [NADPH--hemoprotein reductase] + H2O + H(+). It carries out the reaction a 14alpha-hydroxymethyl steroid + reduced [NADPH--hemoprotein reductase] + O2 = a 14alpha-formyl steroid + oxidized [NADPH--hemoprotein reductase] + 2 H2O + H(+). It catalyses the reaction a 14alpha-formyl steroid + reduced [NADPH--hemoprotein reductase] + O2 = a Delta(14) steroid + formate + oxidized [NADPH--hemoprotein reductase] + H2O + 2 H(+). The enzyme catalyses lanosterol + reduced [NADPH--hemoprotein reductase] + O2 = 32-hydroxylanosterol + oxidized [NADPH--hemoprotein reductase] + H2O + H(+). The catalysed reaction is 32-hydroxylanosterol + reduced [NADPH--hemoprotein reductase] + O2 = 32-oxolanosterol + oxidized [NADPH--hemoprotein reductase] + 2 H2O + H(+). It carries out the reaction 32-oxolanosterol + reduced [NADPH--hemoprotein reductase] + O2 = 4,4-dimethyl-5alpha-cholesta-8,14,24-trien-3beta-ol + formate + oxidized [NADPH--hemoprotein reductase] + H2O + 2 H(+). It catalyses the reaction 24,25-dihydrolanosterol + reduced [NADPH--hemoprotein reductase] + O2 = 32-hydroxy-24,25-dihydrolanosterol + oxidized [NADPH--hemoprotein reductase] + H2O + H(+). The enzyme catalyses 32-hydroxy-24,25-dihydrolanosterol + reduced [NADPH--hemoprotein reductase] + O2 = 32-oxo-24,25-dihydrolanosterol + oxidized [NADPH--hemoprotein reductase] + 2 H2O + H(+). The catalysed reaction is 32-oxo-24,25-dihydrolanosterol + reduced [NADPH--hemoprotein reductase] + O2 = 4,4-dimethyl-8,14-cholestadien-3beta-ol + formate + oxidized [NADPH--hemoprotein reductase] + H2O + 2 H(+). It participates in steroid biosynthesis; zymosterol biosynthesis; zymosterol from lanosterol: step 1/6. Its activity is regulated as follows. Inhibited by azalanstat. Inhibited by azole antifungal agents ketoconazole, itraconazole and fluconazole. Functionally, sterol 14alpha-demethylase that plays a critical role in the cholesterol biosynthesis pathway, being cholesterol the major sterol component in mammalian membranes as well as a precursor for bile acid and steroid hormone synthesis. Cytochrome P450 monooxygenase that catalyzes the three-step oxidative removal of the 14alpha-methyl group (C-32) of sterols such as lanosterol (lanosta-8,24-dien-3beta-ol) and 24,25-dihydrolanosterol (DHL) in the form of formate, and converts the sterols to 4,4-dimethyl-5alpha-cholesta-8,14,24-trien-3beta-ol and 4,4-dimethyl-8,14-cholestadien-3beta-ol, respectively, which are intermediates of cholesterol biosynthesis. Can also demethylate substrates not intrinsic to mammals, such as eburicol (24-methylene-24,25-dihydrolanosterol), but at a lower rate than DHL. The protein is Lanosterol 14-alpha demethylase of Mus musculus (Mouse).